Here is a 395-residue protein sequence, read N- to C-terminus: Probable sugar efflux transporter (395 aa).

12 consecutive transmembrane segments (helical) span residues 13-33 (VVSL…PVAL), 48-68 (VGLI…PCML), 82-102 (IFIL…YWVL), 107-127 (IGVA…VVRL), 134-154 (AQAL…GLPL), 168-188 (FVLI…LLPV), 207-227 (PALL…FTAY), 244-264 (FTTI…MLFS), 272-292 (AGFL…LLPL), 297-317 (WSLS…SLGM), 331-351 (VAMA…ALLG), and 363-383 (IGYM…FTFV).

Belongs to the major facilitator superfamily. SotB (TC 2.A.1.2) family.

It localises to the cell inner membrane. Functionally, involved in the efflux of sugars. The physiological role may be the reduction of the intracellular concentration of toxic sugars or sugar metabolites. This Pectobacterium atrosepticum (strain SCRI 1043 / ATCC BAA-672) (Erwinia carotovora subsp. atroseptica) protein is Probable sugar efflux transporter.